The chain runs to 69 residues: DNA-directed RNA polymerase subunit omega (69 aa).

The protein belongs to the RNA polymerase subunit omega family. In terms of assembly, the RNAP catalytic core consists of 2 alpha, 1 beta, 1 beta' and 1 omega subunit. When a sigma factor is associated with the core the holoenzyme is formed, which can initiate transcription.

The catalysed reaction is RNA(n) + a ribonucleoside 5'-triphosphate = RNA(n+1) + diphosphate. Promotes RNA polymerase assembly. Latches the N- and C-terminal regions of the beta' subunit thereby facilitating its interaction with the beta and alpha subunits. The sequence is that of DNA-directed RNA polymerase subunit omega from Geotalea daltonii (strain DSM 22248 / JCM 15807 / FRC-32) (Geobacter daltonii).